The sequence spans 710 residues: DNA ligase (710 aa).

A disordered region spans residues 1–36 (MTSSSPRHADPDENPYVEAPPTDFEPVGALSEDEAT). NAD(+) contacts are provided by residues 63–67 (DETYD), 111–112 (SI), and E147. K149 functions as the N6-AMP-lysine intermediate in the catalytic mechanism. NAD(+) contacts are provided by R170, E206, and K353. Residues C444, C447, C460, and C466 each contribute to the Zn(2+) site. The 88-residue stretch at 623-710 (ETGDALDGLT…ERGVAWPPEE (88 aa)) folds into the BRCT domain. The interval 657–689 (ATSSVSGNTDYLVAGESPGRSKRDDADAEGVPV) is disordered.

Belongs to the NAD-dependent DNA ligase family. LigA subfamily. Mg(2+) serves as cofactor. Requires Mn(2+) as cofactor.

The catalysed reaction is NAD(+) + (deoxyribonucleotide)n-3'-hydroxyl + 5'-phospho-(deoxyribonucleotide)m = (deoxyribonucleotide)n+m + AMP + beta-nicotinamide D-nucleotide.. Its function is as follows. DNA ligase that catalyzes the formation of phosphodiester linkages between 5'-phosphoryl and 3'-hydroxyl groups in double-stranded DNA using NAD as a coenzyme and as the energy source for the reaction. It is essential for DNA replication and repair of damaged DNA. This is DNA ligase from Halorubrum lacusprofundi (strain ATCC 49239 / DSM 5036 / JCM 8891 / ACAM 34).